We begin with the raw amino-acid sequence, 659 residues long: Macrolide export ATP-binding/permease protein MacB (659 aa).

An ABC transporter domain is found at 10–249 (IELRGIRKRY…QPLLHHAGLS (240 aa)). 47-54 (GSSGSGKS) contacts ATP. 4 helical membrane-spanning segments follow: residues 287 to 307 (SLTL…LAIG), 538 to 558 (LGLV…NVML), 594 to 614 (ITGG…LVFW), and 619 to 639 (VFSF…GLIF).

This sequence belongs to the ABC transporter superfamily. Macrolide exporter (TC 3.A.1.122) family. As to quaternary structure, homodimer.

Its subcellular location is the cell inner membrane. In terms of biological role, non-canonical ABC transporter that contains transmembrane domains (TMD), which form a pore in the inner membrane, and an ATP-binding domain (NBD), which is responsible for energy generation. Confers resistance against macrolides. The polypeptide is Macrolide export ATP-binding/permease protein MacB (Nitrosomonas europaea (strain ATCC 19718 / CIP 103999 / KCTC 2705 / NBRC 14298)).